Reading from the N-terminus, the 139-residue chain is MTRTLAVVLAMTFSAAPVFAEGDIEAGEKAFNKCKSCHQIVSDAGEEIVKGGRTGPNLYGVLGRQAGTADFRYGDDLVAAGEAGLVWDADNFVEYVTDPRAFLRAYLDDSKAKSKMAYKLRSGGEDIAAYLASVSGSSS.

The signal sequence occupies residues 1–20 (MTRTLAVVLAMTFSAAPVFA). The heme c site is built by Cys-34, Cys-37, His-38, and Met-116.

This sequence belongs to the cytochrome c family. Binds 1 heme c group covalently per subunit.

The protein is Cytochrome c-551 of Roseobacter denitrificans (strain ATCC 33942 / OCh 114) (Erythrobacter sp. (strain OCh 114)).